The sequence spans 545 residues: 4-coumarate--CoA ligase 2 (545 aa).

ATP is bound by residues S192, S193, G194, T195, T196, and K200. (E)-4-coumaroyl-AMP contacts are provided by Y242 and S246. Position 263 (K263) interacts with CoA. The interval 265 to 334 (DIAQFLELIP…AKFPNAKLGQ (70 aa)) is SBD1. (E)-4-coumaroyl-AMP is bound by residues A312, Q334, G335, T339, and M347. The ATP site is built by Q334, G335, and T339. An SBD2 region spans residues 335–402 (GYGMTEAGPV…IRGDQIMKGY (68 aa)). 2 residues coordinate ATP: D423 and R438. Residues K440 and K444 each coordinate (E)-4-coumaroyl-AMP. K446 and G447 together coordinate CoA. Residue K529 coordinates ATP.

The protein belongs to the ATP-dependent AMP-binding enzyme family. Mg(2+) serves as cofactor.

The catalysed reaction is (E)-4-coumarate + ATP + CoA = (E)-4-coumaroyl-CoA + AMP + diphosphate. The enzyme catalyses (E)-4-coumarate + ATP + H(+) = (E)-4-coumaroyl-AMP + diphosphate. It catalyses the reaction (E)-4-coumaroyl-AMP + CoA = (E)-4-coumaroyl-CoA + AMP + H(+). It functions in the pathway phytoalexin biosynthesis; 3,4',5-trihydroxystilbene biosynthesis; 3,4',5-trihydroxystilbene from trans-4-coumarate: step 1/2. Carboxylate--CoA ligase that may use 4-coumarate as substrate. Follows a two-step reaction mechanism, wherein the carboxylate substrate first undergoes adenylation by ATP, followed by a thioesterification in the presence of CoA to yield the final CoA thioester. The protein is 4-coumarate--CoA ligase 2 (4CL2) of Solanum tuberosum (Potato).